The chain runs to 542 residues: Peptide chain release factor 3 (542 aa).

The 270-residue stretch at 14–283 (ERRRNFAIIS…AFLDYALKPA (270 aa)) folds into the tr-type G domain. Residues 23 to 30 (SHPDAGKT), 91 to 95 (DTPGH), and 145 to 148 (NKLD) each bind GTP.

Belongs to the TRAFAC class translation factor GTPase superfamily. Classic translation factor GTPase family. PrfC subfamily.

It is found in the cytoplasm. Its function is as follows. Increases the formation of ribosomal termination complexes and stimulates activities of RF-1 and RF-2. It binds guanine nucleotides and has strong preference for UGA stop codons. It may interact directly with the ribosome. The stimulation of RF-1 and RF-2 is significantly reduced by GTP and GDP, but not by GMP. The polypeptide is Peptide chain release factor 3 (Cyanothece sp. (strain PCC 7425 / ATCC 29141)).